A 1701-amino-acid polypeptide reads, in one-letter code: MTSKEIYPLRSTGTMMMISDQDLKLSTQLMLRIAELLLEFDANHEQSSFDPIPILKRISELLEQATDIFIKNDPDPLDDRHPHRTHPDSALGNILKIIFKNDDFMTKLVVSYILARDNVELNIQGSRLLLACIPGLDSKVVFSEPDDFIPRLYTWAGSEGTNETLQGYAMGLLAAALENTENASKYRNENALLVPFGLRRLHELQGRSLEEQKKIGQTDFSQLHAEQSTSNGTSIPSIKITSVDGSTKENEKTFVQSTDPPPPKKRRTEPCLTSLLRTEITQRVPSFHNLRNLDDSNSKWDILQPFLIGDQQVYPLSLATYQRFILQYLAACGEYQDLLLQTFEGNALEILFDYIDLEKSKDVRLTFDALKYLTSLLVHRKFALEFVNKGGIPALLKVPKTSLASVGVVTCLYYIAYSNDVMEILCQMSDEIVDETVQYVLWCLEHSHESGMASACMFFSQGLFYKAILRRFDQYDGPRKLHNYIATLTLMQNNEDVELTEEQIHTSTQCTRGVCTTFRSYLTAHIFIKVENYKKLYGNNLPTGMRFPELVQGDCPDYKSMKPYEEVCWQCEAIVTEMLRFTGSSFREAENLRKLGMVRMFLAVRVLSRDWENISPSLRTEMCVHALETLCMMFCLPSIQTELITQHSYNHSNYDGFTILLQTSLGRYDEDPSLRMAALGCIQRCVYVEPECWKAIIQRVKSSEEKSSSASKRQSKYEIIMNHLERMWTEVRKTDGIMALVNLINCKIPLTEADSIRKTATNTLTGLARHPEVRQILAKLPLIAHNGLQNLMREPVCSDKRDIHAAFCKEAVQLLQVIYGRKIHDQQGKEIQSSEKSHRQWVIENTQVSFNQAELLQLIHDHLLKSKLDSVAAMLKSEAKLPDRPASRSINTPILNKPLPSSGNNFSKINDTYPTLAPRTLESEIGGISARRPSNAASLSSPAMATRSHSTDDDVFATPTLPRRYTTSGAFPKKLMISPARQKLRPLTPGESSSGYRPIKDLNSIVTDYFRNQHSTCKNPVTTCPPFSLFYQHKCPELSYQTNVVRNISLRTLDQELLRPHERVYSQWTNERTIFSRFRNWKTIHDHDESYTKATFSVDDEHLIVGLFNGEVHWINVDTGLDEGHTNCHGSALTNIEPSKDGSMMLTSSAFSRPLSALWRLGEALQRVHTYREDSCVKFANTTMQRIVGTCRDKATVYDTETNHVLDTYLSGIDGLQYEKNYASFSPDDKLIFNDGLLWDVRKKNSAIHVFDRLSKITLFGTFHPHGTQIVINSEVYDIRTFRMLHHVPELNRCQVSFNSTGNIMYATEVTDVHCPDYDEKIFSSFRTFETRDYSALTTFEGRRPVIDLCASHQDQKMCVIEKVRPQMSDYMIQASTQLKIVEIGRLKDNEDENDEEEDEQREDHDEDEDSDESGDGDDDEEIGGNSSDRESVFRTLGRLGDESDSGSSVDDNDTLDDLDFENAQNRIIRRQAQRRRQRLNSSENDAELPGSDEGSDEDGDDDEDGEGDPDFDMGAAIDDLVDAVDEEVDEDELGTDGDDDDSGSWRTTNSIDSEDINLDDLDEEEARVVENEGNNERPARPVDPIEAAAAARRAILGRGLRDLRMGIRGGNRRRNGGGLEQAEMLNARAEEQRVSFMEALVRGAEAERREEEGGDDGESSSSSSSDTDEYQSEEEEINSVSTTALNPALRRRNRRPDDEA.

The segment covering 224 to 245 has biased composition (polar residues); the sequence is HAEQSTSNGTSIPSIKITSVDG. Disordered regions lie at residues 224–269, 883–906, and 932–961; these read HAEQ…RRTE, DRPA…GNNF, and RPSN…TPTL. In terms of domain architecture, LisH spans 851-883; sequence NQAELLQLIHDHLLKSKLDSVAAMLKSEAKLPD. A compositionally biased stretch (polar residues) spans 888 to 906; it reads RSINTPILNKPLPSSGNNF. WD repeat units follow at residues 1086 to 1125, 1128 to 1169, 1171 to 1210, and 1215 to 1252; these read DHDE…DEGH, CHGS…QRVH, YRED…DTYL, and GLQY…HVFD. 2 short sequence motifs (DWD box) span residues 1237 to 1245 and 1275 to 1282; these read LLWDVRKKN and EVYDIRTF. 3 disordered regions span residues 1384–1559, 1566–1585, and 1641–1701; these read IGRL…DINL, EARV…PVDP, and LVRG…DDEA. 2 stretches are compositionally biased toward acidic residues: residues 1390 to 1423 and 1451 to 1461; these read NEDE…DEEI and DDNDTLDDLDF. Over residues 1468–1479 the composition is skewed to basic residues; the sequence is IIRRQAQRRRQR. 2 stretches are compositionally biased toward acidic residues: residues 1494–1512 and 1520–1543; these read EGSD…DPDF and DLVD…DDDS. Residues 1567–1581 show a composition bias toward basic and acidic residues; it reads ARVVENEGNNERPAR. The segment covering 1667 to 1678 has biased composition (acidic residues); the sequence is DTDEYQSEEEEI.

This sequence belongs to the VPRBP/DCAF1 family. In terms of assembly, component of the cul4-rbx1-ddb1-dcaf1 E3 ubiquitin-protein ligase complex.

Its subcellular location is the nucleus. It functions in the pathway protein modification; protein ubiquitination. Functionally, component of the cul4-rbx1-ddb1-dcaf1 E3 ubiquitin-protein ligase complex, dcaf1 may function as the substrate recognition module within this complex. This chain is DDB1- and CUL4-associated factor homolog 1 (dcaf-1), found in Caenorhabditis elegans.